A 186-amino-acid chain; its full sequence is Ribosome-recycling factor (186 aa).

This sequence belongs to the RRF family.

It localises to the cytoplasm. Its function is as follows. Responsible for the release of ribosomes from messenger RNA at the termination of protein biosynthesis. May increase the efficiency of translation by recycling ribosomes from one round of translation to another. In Bordetella parapertussis (strain 12822 / ATCC BAA-587 / NCTC 13253), this protein is Ribosome-recycling factor.